A 62-amino-acid polypeptide reads, in one-letter code: Protein DsrB (62 aa).

The protein belongs to the DsrB family.

This chain is Protein DsrB, found in Escherichia fergusonii (strain ATCC 35469 / DSM 13698 / CCUG 18766 / IAM 14443 / JCM 21226 / LMG 7866 / NBRC 102419 / NCTC 12128 / CDC 0568-73).